A 432-amino-acid polypeptide reads, in one-letter code: Enolase (432 aa).

A (2R)-2-phosphoglycerate-binding site is contributed by Gln-163. The Proton donor role is filled by Glu-205. Residues Asp-242, Glu-288, and Asp-315 each coordinate Mg(2+). The (2R)-2-phosphoglycerate site is built by Lys-340, Arg-369, Ser-370, and Lys-391. Lys-340 functions as the Proton acceptor in the catalytic mechanism.

This sequence belongs to the enolase family. Requires Mg(2+) as cofactor.

The protein localises to the cytoplasm. It localises to the secreted. It is found in the cell surface. The catalysed reaction is (2R)-2-phosphoglycerate = phosphoenolpyruvate + H2O. The protein operates within carbohydrate degradation; glycolysis; pyruvate from D-glyceraldehyde 3-phosphate: step 4/5. In terms of biological role, catalyzes the reversible conversion of 2-phosphoglycerate (2-PG) into phosphoenolpyruvate (PEP). It is essential for the degradation of carbohydrates via glycolysis. This is Enolase from Enterococcus faecalis (strain ATCC 700802 / V583).